The primary structure comprises 137 residues: Basic phospholipase A2 homolog bothropstoxin-I (137 aa).

The first 16 residues, 1-16, serve as a signal peptide directing secretion; the sequence is MRTLWIMAVLLVGVEG. Intrachain disulfides connect cysteine 42/cysteine 131, cysteine 44/cysteine 60, cysteine 59/cysteine 111, cysteine 65/cysteine 137, cysteine 66/cysteine 104, cysteine 73/cysteine 97, and cysteine 91/cysteine 102. The important for membrane-damaging activities in eukaryotes and bacteria; heparin-binding stretch occupies residues 121–133; the sequence is KKYRYHLKPFCKK.

It belongs to the phospholipase A2 family. Group II subfamily. K49 sub-subfamily. As to quaternary structure, homodimer; non-covalently linked (probable alternative/compact dimer conformation in solution). Binds to heparin. Expressed by the venom gland.

It is found in the secreted. Its activity is regulated as follows. Suramin inhibits both myotoxic and muscle-paralyzing activities. Chicoric acid inhibits myotoxic activity. Zinc ions inhibits the myotoxic activity and the neuromuscular blockade. Heparin inhibits myotoxic activity. Its function is as follows. Snake venom phospholipase A2 homolog that lacks enzymatic activity. Shows local myotoxic activity. Induces inflammation, since it induces edema and leukocytes infiltration. In addition, it induces NLRP3 NLRP3, ASC (PYCARD), caspase-1 (CASP1), and IL-1beta (IL1B) gene expression in the gastrocnemius muscle, showing that it is able to activate NLRP3 inflammasome. It also damages artificial and myoblast membranes by a calcium-independent mechanism, has bactericidal activity, and induces neuromuscular blockade. A model of myotoxic mechanism has been proposed: an apo Lys49-PLA2 is activated by the entrance of a hydrophobic molecule (e.g. fatty acid) at the hydrophobic channel of the protein leading to a reorientation of a monomer. This reorientation causes a transition between 'inactive' to 'active' states, causing alignment of C-terminal and membrane-docking sites (MDoS) side-by-side and putting the membrane-disruption sites (MDiS) in the same plane, exposed to solvent and in a symmetric position for both monomers. The MDoS region stabilizes the toxin on membrane by the interaction of charged residues with phospholipid head groups. Subsequently, the MDiS region destabilizes the membrane with penetration of hydrophobic residues. This insertion causes a disorganization of the membrane, allowing an uncontrolled influx of ions (i.e. calcium and sodium), and eventually triggering irreversible intracellular alterations and cell death. This is Basic phospholipase A2 homolog bothropstoxin-I from Bothrops jararacussu (Jararacussu).